The sequence spans 424 residues: Hemagglutinin-esterase (424 aa).

Positions 1–16 are cleaved as a signal peptide; sequence MFLLPRFVLVSCIIGS. The segment at 7 to 127 is esterase domain 1; it reads FVLVSCIIGS…SNDIWMQNKG (121 aa). Residues 17–392 are Virion surface-facing; the sequence is LGFDNPPTNV…PICVYDPLPI (376 aa). Catalysis depends on S40, which acts as the Nucleophile. An intrachain disulfide couples C44 to C65. N54, N89, N153, N236, and N301 each carry an N-linked (GlcNAc...) asparagine; by host glycan. 3 cysteine pairs are disulfide-bonded: C113–C162, C197–C276, and C205–C249. Positions 128–266 are receptor binding; the sequence is LFYTQVYKNM…GNYLAISNEL (139 aa). Residues 267–379 are esterase domain 2; sequence LLTVPTKAIC…RCPTAADINT (113 aa). A disulfide bond links C307 and C312. N-linked (GlcNAc...) asparagine; by host glycosylation occurs at N316. Catalysis depends on charge relay system residues D326 and H329. C347 and C371 form a disulfide bridge. N358 carries N-linked (GlcNAc...) asparagine; by host glycosylation. The helical transmembrane segment at 393–413 threads the bilayer; the sequence is IFLGILLGVAVIIIVVLLLYF. The Intravirion segment spans residues 414 to 424; sequence MVDNGTRLHDA. N417 carries an N-linked (GlcNAc...) asparagine; by host glycan.

Belongs to the influenza type C/coronaviruses hemagglutinin-esterase family. Homodimer; disulfide-linked. Forms a complex with the M protein in the pre-Golgi. Associates then with S-M complex to form a ternary complex S-M-HE. In terms of processing, N-glycosylated in the host RER.

The protein localises to the virion membrane. Its subcellular location is the host cell membrane. The enzyme catalyses N-acetyl-9-O-acetylneuraminate + H2O = N-acetylneuraminate + acetate + H(+). It carries out the reaction N-acetyl-4-O-acetylneuraminate + H2O = N-acetylneuraminate + acetate + H(+). Its function is as follows. Structural protein that makes short spikes at the surface of the virus. Contains receptor binding and receptor-destroying activities. Mediates de-O-acetylation of N-acetyl-4-O-acetylneuraminic acid, which is probably the receptor determinant recognized by the virus on the surface of erythrocytes and susceptible cells. This receptor-destroying activity is important for virus release as it probably helps preventing self-aggregation and ensures the efficient spread of the progeny virus from cell to cell. May serve as a secondary viral attachment protein for initiating infection, the spike protein being the major one. May become a target for both the humoral and the cellular branches of the immune system. The sequence is that of Hemagglutinin-esterase from Bovine coronavirus (strain Ontario) (BCoV).